A 65-amino-acid chain; its full sequence is Temporin-LK1 (65 aa).

A signal peptide spans 1 to 22 (MFTMKKSLLLLFFLGAINLPLC). Positions 23 to 44 (QEERNAEEERRDGDDEGSVEVQ) are excised as a propeptide. Phe63 is subject to Phenylalanine amide.

As to expression, expressed by the skin glands.

It is found in the secreted. Its function is as follows. Has antimicrobial activity against Gram-positive bacteria S.aureus ATCC 2592 (MIC=2.5 uM), S.aureus ATCC 43300 (MIC=2.5 uM) and B.subtilis (MIC=15.0 uM), against Gram-negative bacteria E.coli ML-35P (MIC=30.0 uM), P.aeruginosa PA01 (MIC=2.5 uM) and P.aeruginosa ATCC 27853 (MIC=2.5 uM) and against fungus C.albicans ATCC 2002 (MIC=5.0 uM). This chain is Temporin-LK1, found in Limnonectes kuhlii (Kuhl's Creek frog).